The sequence spans 830 residues: MASTPRIVIIGAGIVGTNLADELVTRGWNNITVLDQGPLNMPGGSTSHAPGLVFQTNPSKTMASFAKYTVEKLLSLTEDGVSCFNQVGGLEVATTETRLADLKRKLGYAAAWGIEGRLLSPAECQELYPLLDGENILGGLHVPSDGLASAARAVQLLIKRTESAGVTYRGSTTVTGIEQSGGRVTGVQTADGVIPADIVVSCAGFWGAKIGAMIGMAVPLLPLAHQYVKTTPVPAQQGRNDQPNGARLPILRHQDQDLYYREHGDRYGIGSYAHRPMPVDVDTLGAYAPETVSEHHMPSRLDFTLEDFLPAWEATKQLLPALADSEIEDGFNGIFSFTPDGGPLLGESKELDGFYVAEAVWVTHSAGVAKAMAELLTTGRSETDLGECDITRFEDVQLTPEYVSETSQQNFVEIYDVLHPLQPRLSPRNLRVSPFHARHKELGAFFLEAGGWERPYWFEANAALLKEMPAEWLPPARDAWSGMFSSPIAAAEAWKTRTAVAMYDMTPLKRLEVSGPGALKLLQELTTADLAKKPGAVTYTLLLDHAGGVRSDITVARLSEDTFQLGANGNIDTAYFERAARHQTQSGSATDWVQVRDTTGGTCCIGLWGPLARDLVSKVSDDDFTNDGLKYFRAKNVVIGGIPVTAMRLSYVGELGWELYTSADNGQRLWDALWQAGQPFGVIAAGRAAFSSLRLEKGYRSWGTDMTTEHDPFEAGLGFAVKMAKESFIGKGALEGRTEEASARRLRCLTIDDGRSIVLGKEPVFYKEQAVGYVTSAAYGYTVAKPIAYSYLPGTVSVGDSVDIEYFGRRITATVTEDPLYDPKMTRLRG.

Residues isoleucine 14 to valine 15, aspartate 35 to glutamine 36, serine 45 to histidine 48, leucine 52, and valine 174 each bind FAD. The residue at position 48 (histidine 48) is a Pros-8alpha-FAD histidine. Residues histidine 225 and tyrosine 259 contribute to the active site. FAD is bound by residues tyrosine 259 and valine 360–threonine 363. Residue tyrosine 539 participates in (6S)-5,6,7,8-tetrahydrofolate binding. Aspartate 552 serves as the catalytic For 5,10-methylenetetrahydrofolate synthesis activity. Residues threonine 554, glycine 566, and glutamate 658–tyrosine 660 each bind (6S)-5,6,7,8-tetrahydrofolate.

The protein belongs to the GcvT family. The cofactor is FAD.

The enzyme catalyses N,N-dimethylglycine + O2 + H2O = sarcosine + formaldehyde + H2O2. It catalyses the reaction N,N-dimethylglycine + (6S)-5,6,7,8-tetrahydrofolate + O2 = sarcosine + (6R)-5,10-methylene-5,6,7,8-tetrahydrofolate + H2O2. Its function is as follows. Catalyzes the oxidative demethylation of N,N-dimethylglycine to yield sarcosine, formaldehyde and hydrogen peroxide. The oxidation of dimethylglycine is coupled to the synthesis of 5,10-methylenetetrahydrofolate through an unusual substrate channeling mechanism. This channeling occurs by nonbiased diffusion of the iminium intermediate through a large solvent cavity connecting active site 1 (N-terminus) and active site 2 (C-terminus). The synthesis of 5,10-methylenetetrahydrofolate (at active site 2) prevents the accumulation of formaldehyde, formed by hydrolysis of the iminium intermediate product (at active site 1). Does not oxidize sarcosine. The chain is Dimethylglycine oxidase (dmg) from Arthrobacter globiformis.